The following is a 594-amino-acid chain: MTMTLHTKASGMALLHQIQGNELETLNLPQFKIPLERPLGEVYVESSKPPVYDYPEGAAYDFNAAAAASASVYGQSGLAYGPGSEAAAFGANGLGGFPPLNSVSPSQLMLLHPPPQLSPYLHPPGQQVPYYLENEPSGYSVCEAGPQAFYRPNADNRRQGGRERLASSGDKGSMAMESAKETRYCAVCNDYASGYHYGVWSCEGCKAFFKRSIQGHNDYMCPATNQCTIDKNRRKSCQACRLRKCYEVGMMKGGIRKDRRGGRMLKHKRQRDDGEGRNEAGPSGDRRPANFWPSPLLIKHTKKISPVLSLTAEQMISALLDAEPPVLYSEYDATRPFNEASMMGLLTNLADRELVHMINWAKRVPGFVDLSLHDQVHLLECAWLEILMIGLVWRSMEHPGKLLFAPNLLLDRNQGKCVEGMVEIFDMLLATSSRLRMMNLQGEEFVCLKSIILLNSGVYTFLSSTLKSLEEKDHIHRVLDKMTDTLIHLMAKAGLTLQQHRRLAQLLLILSHIRHMSNKGMEHLYSMKCKNVVPLYDLLLEMLDAHRLHAPANHGGAPMEETNQSQLATTGSTSPHSMQTYYITGEAEGFPNTI.

The tract at residues 1 to 184 is modulating (transactivation AF-1); mediates interaction with MACROD1; sequence MTMTLHTKAS…AMESAKETRY (184 aa). S10 carries an O-linked (GlcNAc) serine glycan. Residues 35-47 are required for interaction with NCOA1; that stretch reads LERPLGEVYVESS. The interaction with DDX5; self-association stretch occupies residues 35-174; sequence LERPLGEVYV…LASSGDKGSM (140 aa). A phosphoserine; by CDK2 mark is found at S104 and S106. Residue S118 is modified to Phosphoserine. The segment at 152-173 is disordered; sequence PNADNRRQGGRERLASSGDKGS. Over residues 154–165 the composition is skewed to basic and acidic residues; that stretch reads ADNRRQGGRERL. S167 carries the phosphoserine; by CK2 modification. 2 NR C4-type zinc fingers span residues 185 to 205 and 221 to 245; these read CAVCNDYASGYHYGVWSCEGC and CPATNQCTIDKNRRKSCQACRLRKC. A DNA-binding region (nuclear receptor) is located at residues 185–250; sequence CAVCNDYASG…RLRKCYEVGM (66 aa). Positions 185–310 are mediates interaction with DNTTIP2; that stretch reads CAVCNDYASG…TKKISPVLSL (126 aa). A hinge region spans residues 251–310; it reads MKGGIRKDRRGGRMLKHKRQRDDGEGRNEAGPSGDRRPANFWPSPLLIKHTKKISPVLSL. A compositionally biased stretch (basic residues) spans 257 to 269; sequence KDRRGGRMLKHKR. The interval 257 to 293 is disordered; that stretch reads KDRRGGRMLKHKRQRDDGEGRNEAGPSGDRRPANFWP. R260 is modified (asymmetric dimethylarginine; by PRMT1). The interval 262-594 is interaction with AKAP13; that stretch reads GRMLKHKRQR…GEAEGFPNTI (333 aa). The self-association stretch occupies residues 264 to 594; the sequence is MLKHKRQRDD…GEAEGFPNTI (331 aa). Residues 270-288 show a composition bias toward basic and acidic residues; that stretch reads QRDDGEGRNEAGPSGDRRP. Residues 311–546 form the NR LBD domain; the sequence is TAEQMISALL…DLLLEMLDAH (236 aa). Residues 311–594 form a transactivation AF-2 region; the sequence is TAEQMISALL…GEAEGFPNTI (284 aa). 17beta-estradiol-binding residues include E353 and R394. A lipid anchor (S-palmitoyl cysteine) is attached at C447. H523 lines the 17beta-estradiol pocket. Y536 is modified (phosphotyrosine; by Tyr-kinases). Residues 551-575 are disordered; sequence PANHGGAPMEETNQSQLATTGSTSP. Residues 561–575 are compositionally biased toward polar residues; the sequence is ETNQSQLATTGSTSP. A glycan (O-linked (GlcNAc) threonine) is linked at T570.

This sequence belongs to the nuclear hormone receptor family. NR3 subfamily. Binds DNA as a homodimer. Can form a heterodimer with ESR2. Interacts with coactivator NCOA5. Interacts with PELP1, the interaction is enhanced by 17-beta-estradiol; the interaction increases ESR1 transcriptional activity. Interacts with NCOA7; the interaction is ligand-inducible. Interacts with AKAP13, CUEDC2, HEXIM1, KDM5A, MAP1S, SMARD1, and UBE1C. Interacts with MUC1; the interaction is stimulated by 7 beta-estradiol (E2) and enhances ESR1-mediated transcription. Interacts with DNTTIP2, and UIMC1. Interacts with KMT2D/MLL2. Interacts with ATAD2; the interaction is enhanced by estradiol. Interacts with KIF18A and LDB1. Interacts with RLIM (via its C-terminus). Interacts with MACROD1. Interacts with SH2D4A and PLCG. Interacts with SH2D4A; the interaction blocks binding to PLCG and inhibits estrogen-induced cell proliferation. Interacts with DYNLL1. Interacts with CCDC62; the interaction requires estradiol and appears to enhance the transcription of target genes. Interacts with NR2C1; the interaction prevents homodimerization of ESR1 and suppresses its transcriptional activity and cell growth. Interacts with DNAAF4. Interacts with PRMT2. Interacts with RBFOX2. Interacts with EP300; the interaction is estrogen-dependent and enhanced by CITED1. Interacts with CITED1; the interaction is estrogen-dependent. Interacts with FAM120B, FOXL2, PHB2 and SLC30A9. Interacts with coactivators NCOA3 and NCOA6. Interacts with STK3/MST2 only in the presence of SAV1 and vice-versa. Binds to CSNK1D. Interacts with NCOA2; NCOA2 can interact with ESR1 AF-1 and AF-2 domains simultaneously and mediate their transcriptional synergy. Interacts with DDX5. Interacts with NCOA1; the interaction seems to require a self-association of N-terminal and C-terminal regions. Interacts with ZNF366, DDX17, NFKB1, RELA, SP1 and SP3. Interacts with NRIP1. Interacts with GPER1; the interaction occurs in an estrogen-dependent manner. Interacts with CLOCK and the interaction is stimulated by estrogen. Interacts with TRIP4 (ufmylated); estrogen dependent. Interacts with LMTK3; the interaction phosphorylates ESR1 (in vitro) and protects it against proteasomal degradation. Interacts with CCAR2 (via N-terminus) in a ligand-independent manner. Interacts with ZFHX3. Interacts with SFR1 in a ligand-dependent and -independent manner. Interacts with DCAF13, LATS1 and DCAF1; regulates ESR1 ubiquitination and ubiquitin-mediated proteasomal degradation. Interacts (via DNA-binding domain) with POU4F2 (C-terminus); this interaction increases the estrogen receptor ESR1 transcriptional activity in a DNA- and ligand 17-beta-estradiol-independent manner. Interacts with ESRRB isoform 1. Interacts with UBE3A and WBP2. Interacts with GTF2B. Interacts with RBM39. In the absence of hormonal ligand, interacts with TACC1. Interacts with PI3KR1 or PI3KR2 and PTK2/FAK1. Interacts with SRC. Interacts with BAG1; the interaction is promoted in the absence of estradiol (17-beta-estradiol/E2). Interacts with and ubiquitinated by STUB1; the interaction is promoted in the absence of estradiol (17-beta-estradiol/E2). Interacts with NEDD8. Ubiquitinated; regulated by LATS1 via DCAF1 it leads to ESR1 proteasomal degradation. Deubiquitinated by OTUB1. Ubiquitinated by STUB1/CHIP; in the CA1 hippocampal region following loss of endogenous circulating estradiol (17-beta-estradiol/E2). Ubiquitinated by UBR5, leading to its degradation: UBR5 specifically recognizes and binds ligand-bound ESR1 when it is not associated with coactivators (NCOAs). In presence of NCOAs, the UBR5-degron is not accessible, preventing its ubiquitination and degradation. Post-translationally, phosphorylated by cyclin A/CDK2 and CK1. Phosphorylation probably enhances transcriptional activity. Dephosphorylation at Ser-118 by PPP5C inhibits its transactivation activity. Phosphorylated by LMTK3 (in vitro). In terms of processing, palmitoylated at Cys-447 by ZDHHC7 and ZDHHC21. Palmitoylation is required for plasma membrane targeting and for rapid intracellular signaling via ERK and AKT kinases and cAMP generation, but not for signaling mediated by the nuclear hormone receptor. Dimethylated by PRMT1 at Arg-260. The methylation may favor cytoplasmic localization. Demethylated by JMJD6 at Arg-260.

It is found in the nucleus. Its subcellular location is the cytoplasm. The protein resides in the golgi apparatus. The protein localises to the cell membrane. Nuclear hormone receptor. The steroid hormones and their receptors are involved in the regulation of eukaryotic gene expression and affect cellular proliferation and differentiation in target tissues. Ligand-dependent nuclear transactivation involves either direct homodimer binding to a palindromic estrogen response element (ERE) sequence or association with other DNA-binding transcription factors, such as AP-1/c-Jun, c-Fos, ATF-2, Sp1 and Sp3, to mediate ERE-independent signaling. Ligand binding induces a conformational change allowing subsequent or combinatorial association with multiprotein coactivator complexes through LXXLL motifs of their respective components. Mutual transrepression occurs between the estrogen receptor (ER) and NF-kappa-B in a cell-type specific manner. Decreases NF-kappa-B DNA-binding activity and inhibits NF-kappa-B-mediated transcription from the IL6 promoter and displace RELA/p65 and associated coregulators from the promoter. Recruited to the NF-kappa-B response element of the CCL2 and IL8 promoters and can displace CREBBP. Present with NF-kappa-B components RELA/p65 and NFKB1/p50 on ERE sequences. Can also act synergistically with NF-kappa-B to activate transcription involving respective recruitment adjacent response elements; the function involves CREBBP. Can activate the transcriptional activity of TFF1. Also mediates membrane-initiated estrogen signaling involving various kinase cascades. Essential for MTA1-mediated transcriptional regulation of BRCA1 and BCAS3. Maintains neuronal survival in response to ischemic reperfusion injury when in the presence of circulating estradiol (17-beta-estradiol/E2). This is Estrogen receptor (ESR1) from Equus caballus (Horse).